The chain runs to 387 residues: 3-hydroxyisobutyryl-CoA hydrolase-like protein 5 (387 aa).

Alanine 2 carries the N-acetylalanine modification.

This sequence belongs to the enoyl-CoA hydratase/isomerase family.

The protein is 3-hydroxyisobutyryl-CoA hydrolase-like protein 5 of Arabidopsis thaliana (Mouse-ear cress).